We begin with the raw amino-acid sequence, 218 residues long: Thiopurine S-methyltransferase (218 aa).

S-adenosyl-L-methionine-binding residues include W10, L45, E66, and R123.

Belongs to the class I-like SAM-binding methyltransferase superfamily. TPMT family.

The protein resides in the cytoplasm. The enzyme catalyses S-adenosyl-L-methionine + a thiopurine = S-adenosyl-L-homocysteine + a thiopurine S-methylether.. This is Thiopurine S-methyltransferase from Xanthomonas euvesicatoria pv. vesicatoria (strain 85-10) (Xanthomonas campestris pv. vesicatoria).